A 400-amino-acid chain; its full sequence is Enoyl-[acyl-carrier-protein] reductase [NADH] (400 aa).

NAD(+) is bound by residues 48–53 (GASTGY), 74–75 (FE), 111–112 (DA), and 139–140 (LA). Tyrosine 225 contributes to the substrate binding site. Catalysis depends on tyrosine 235, which acts as the Proton donor. NAD(+) is bound by residues lysine 244 and 273 to 275 (VVT).

Belongs to the TER reductase family. Monomer.

The catalysed reaction is a 2,3-saturated acyl-[ACP] + NAD(+) = a (2E)-enoyl-[ACP] + NADH + H(+). Its pathway is lipid metabolism; fatty acid biosynthesis. Functionally, involved in the final reduction of the elongation cycle of fatty acid synthesis (FAS II). Catalyzes the reduction of a carbon-carbon double bond in an enoyl moiety that is covalently linked to an acyl carrier protein (ACP). This chain is Enoyl-[acyl-carrier-protein] reductase [NADH], found in Burkholderia ambifaria (strain MC40-6).